The primary structure comprises 255 residues: Triosephosphate isomerase (255 aa).

Substrate is bound at residue 9–11 (NWK). Histidine 95 acts as the Electrophile in catalysis. The Proton acceptor role is filled by glutamate 167. Residues glycine 173, serine 212, and 233 to 234 (GG) contribute to the substrate site.

This sequence belongs to the triosephosphate isomerase family. Homodimer.

The protein resides in the cytoplasm. It catalyses the reaction D-glyceraldehyde 3-phosphate = dihydroxyacetone phosphate. Its pathway is carbohydrate biosynthesis; gluconeogenesis. It functions in the pathway carbohydrate degradation; glycolysis; D-glyceraldehyde 3-phosphate from glycerone phosphate: step 1/1. Functionally, involved in the gluconeogenesis. Catalyzes stereospecifically the conversion of dihydroxyacetone phosphate (DHAP) to D-glyceraldehyde-3-phosphate (G3P). The polypeptide is Triosephosphate isomerase (Escherichia fergusonii (strain ATCC 35469 / DSM 13698 / CCUG 18766 / IAM 14443 / JCM 21226 / LMG 7866 / NBRC 102419 / NCTC 12128 / CDC 0568-73)).